A 65-amino-acid polypeptide reads, in one-letter code: MAKKGTRIVVTLECTECRSAPASEKRSPGVSRYTTEKNRRNTSDRLELKKFCPQLNKMTIHKEIK.

Positions 20–42 are disordered; the sequence is APASEKRSPGVSRYTTEKNRRNT.

Belongs to the bacterial ribosomal protein bL33 family.

The polypeptide is Large ribosomal subunit protein bL33 (Prochlorococcus marinus (strain SARG / CCMP1375 / SS120)).